The chain runs to 3131 residues: Enniatin synthase (3131 aa).

A condensation 1 region spans residues alanine 53 to glutamate 466. The segment at asparagine 186–serine 212 is disordered. The adenylation 1 stretch occupies residues serine 495–arginine 887. One can recognise a Carrier 1 domain in the interval serine 1010–serine 1086. At serine 1047 the chain carries O-(pantetheine 4'-phosphoryl)serine. The condensation 2 stretch occupies residues serine 1105–threonine 1534. The adenylation 2 stretch occupies residues phenylalanine 1563–arginine 1960. Residues glutamate 2021 to isoleucine 2177 are S-adenosyl-L-methionine-dependent N-methyltransferase. 2 Carrier domains span residues phenylalanine 2504–leucine 2578 and alanine 2598–histidine 2671. O-(pantetheine 4'-phosphoryl)serine occurs at positions 2538 and 2632. The interval glutamine 2718–threonine 3123 is condensation 3.

It belongs to the ATP-dependent AMP-binding enzyme family. The cofactor is pantetheine 4'-phosphate. The N-terminus is blocked.

The protein operates within antibiotic biosynthesis; enniatin biosynthesis. With respect to regulation, the N-methylation activity is inhibited by S-adenosyl-L-homocysteine and sinefugin. Its function is as follows. Nonribosomal peptide synthetase that synthesizes enniatin by coupling three D-hydroxycarboxylic acids and three L-amino acids via amide and ester bonds in an alternating fashion. Whereas ESYN1 can accept different amino acids as precursors (L -valine, L-isoleucine or L-leucine), only one species of D-hydroxycarboxylic acid can be found in natural enniatin isolates (D-hydroxyisovaleric acid, D-Hiv). D-Hiv stems from L-valine deanimation by a valine aminotransferase to 2-keto-isovaleric acid (2-Kiv), which becomes subsequently reduced by a keto-isovaleric acid reductase (KivR) to D-Hiv. Peptide bond formation and N-methylation of the amino acid occur before three enzyme-bound dipeptidols are condensed to a hexapeptidol. This is Enniatin synthase from Fusarium equiseti (Fusarium scirpi).